The chain runs to 476 residues: Cysteine--tRNA ligase (476 aa).

Cysteine 28 serves as a coordination point for Zn(2+). Residues 30-40 (PTVYDHTHLGH) carry the 'HIGH' region motif. Zn(2+)-binding residues include cysteine 208, histidine 233, and glutamate 237. Positions 265 to 269 (KMSKS) match the 'KMSKS' region motif. Position 268 (lysine 268) interacts with ATP.

Belongs to the class-I aminoacyl-tRNA synthetase family. The cofactor is Zn(2+).

The protein resides in the cytoplasm. The enzyme catalyses tRNA(Cys) + L-cysteine + ATP = L-cysteinyl-tRNA(Cys) + AMP + diphosphate. This Methanococcus maripaludis (strain C7 / ATCC BAA-1331) protein is Cysteine--tRNA ligase.